Consider the following 356-residue polypeptide: Peptide methionine sulfoxide reductase MsrA/MsrB (356 aa).

A peptide methionine sulfoxide reductase A region spans residues His46 to Glu199. Residue Cys54 is part of the active site. Residues Asp216 to Leu339 enclose the MsrB domain. The active-site Nucleophile is the Cys328.

This sequence in the N-terminal section; belongs to the MsrA Met sulfoxide reductase family. It in the C-terminal section; belongs to the MsrB Met sulfoxide reductase family.

The enzyme catalyses L-methionyl-[protein] + [thioredoxin]-disulfide + H2O = L-methionyl-(S)-S-oxide-[protein] + [thioredoxin]-dithiol. It catalyses the reaction [thioredoxin]-disulfide + L-methionine + H2O = L-methionine (S)-S-oxide + [thioredoxin]-dithiol. The catalysed reaction is L-methionyl-[protein] + [thioredoxin]-disulfide + H2O = L-methionyl-(R)-S-oxide-[protein] + [thioredoxin]-dithiol. Its function is as follows. Has an important function as a repair enzyme for proteins that have been inactivated by oxidation. Catalyzes the reversible oxidation-reduction of methionine sulfoxide in proteins to methionine. This is Peptide methionine sulfoxide reductase MsrA/MsrB (msrAB) from Aggregatibacter actinomycetemcomitans (Actinobacillus actinomycetemcomitans).